The primary structure comprises 365 residues: P43 5S RNA-binding protein (365 aa).

9 consecutive C2H2-type zinc fingers follow at residues 15-39, 45-69, 75-100, 106-130, 136-160, 163-187, 191-213, 220-245, and 251-275; these read LRCPAAGCKAFYRKEGKLQDHMAGH, WKCGIKDCDKVFARKRQILKHVKRH, LSCPTAGCKMTFSTKKSLSRHKLYKH, LKCFVPGCKRSFRKKRALRRHLSVH, SVCDVPGCSWKSSSVAKLVAHQKRH, YRCSYEGCQTVSPTWTALQTHVKKH, LQCAACKKPFKKASALRRHKATH, LPCPRQDCDKTFSSVFNLTHHVRKLH, and HRCPHSGCTRSFAMRESLLRHLVVH.

The 42S RNP particle comprises four subunits each of which contains one molecule of 5S RNA, three molecules of tRNA, two molecules of p50 (EF1-alpha) and one molecule of the 5S RNA binding protein 43.

Functionally, p43 is a 5S RNA binding protein which is a major constituent of oocytes and comprises part of a 42S ribonucleoprotein storage particle. The polypeptide is P43 5S RNA-binding protein (Xenopus laevis (African clawed frog)).